The chain runs to 156 residues: Melatonin receptor type 1A (156 aa).

The next 3 helical transmembrane spans lie at 19-39 (LCYVFLIWTLTLIAIMPNLQT), 62-82 (TIALVVFHFVVPMIIVTFCYL), and 115-135 (FVVFVLFALCWAPLNFIGLIV).

This sequence belongs to the G-protein coupled receptor 1 family. At least in the brain, more precisely in the pars tuberalis and the suprachiasmatic nucleus.

It localises to the cell membrane. In terms of biological role, high affinity receptor for melatonin. Likely to mediate the reproductive and circadian actions of melatonin. The activity of this receptor is mediated by pertussis toxin sensitive G proteins that inhibit adenylate cyclase activity. Possibly involved in sleep induction, by melatonin activation of the potassium channel KCNMA1/BK and the dissociation of G-beta and G-gamma subunits, thereby decreasing synaptic transmission. This is Melatonin receptor type 1A (Mtnr1a) from Rattus norvegicus (Rat).